Here is a 670-residue protein sequence, read N- to C-terminus: Acetyl-coenzyme A synthetase (670 aa).

Residues 211–214 and Thr329 each bind CoA; that span reads RGGK. Residues 404–406, 428–433, Asp519, and Arg534 contribute to the ATP site; these read GEP and DTYWQT. Ser542 is a binding site for CoA. Arg545 provides a ligand contact to ATP. A CoA-binding site is contributed by Arg603.

It belongs to the ATP-dependent AMP-binding enzyme family.

The enzyme catalyses acetate + ATP + CoA = acetyl-CoA + AMP + diphosphate. The chain is Acetyl-coenzyme A synthetase (facA) from Emericella nidulans (strain FGSC A4 / ATCC 38163 / CBS 112.46 / NRRL 194 / M139) (Aspergillus nidulans).